A 278-amino-acid chain; its full sequence is uncharacterized protein (278 aa).

In terms of domain architecture, Response regulatory spans 1-55; the sequence is MKIRERFSMVDLPVLIITAAIIGHDKYKAFHAGANDILQKPYHYSEFMARIQNLI.

This is an uncharacterized protein from Bacillus subtilis (strain 168).